The sequence spans 255 residues: Hydroxyacylglutathione hydrolase (255 aa).

The Zn(2+) site is built by His-55, His-57, Asp-59, His-60, His-113, Asp-132, and His-170.

The protein belongs to the metallo-beta-lactamase superfamily. Glyoxalase II family. As to quaternary structure, monomer. Requires Zn(2+) as cofactor.

It carries out the reaction an S-(2-hydroxyacyl)glutathione + H2O = a 2-hydroxy carboxylate + glutathione + H(+). Its pathway is secondary metabolite metabolism; methylglyoxal degradation; (R)-lactate from methylglyoxal: step 2/2. Thiolesterase that catalyzes the hydrolysis of S-D-lactoyl-glutathione to form glutathione and D-lactic acid. The sequence is that of Hydroxyacylglutathione hydrolase from Methylobacterium sp. (strain 4-46).